Here is a 569-residue protein sequence, read N- to C-terminus: uncharacterized protein (569 aa).

The helical transmembrane segment at 2-22 threads the bilayer; sequence VVIAALLGSLAVLAFLFYLWY.

It is found in the membrane. This is an uncharacterized protein from Mycoplasma pneumoniae (strain ATCC 29342 / M129 / Subtype 1) (Mycoplasmoides pneumoniae).